The primary structure comprises 362 residues: DNA polymerase IV (362 aa).

Residues 6-187 (IIHVDMDAFY…LPVSSFHGVG (182 aa)) form the UmuC domain. Positions 10 and 105 each coordinate Mg(2+). Residue E106 is part of the active site.

This sequence belongs to the DNA polymerase type-Y family. In terms of assembly, monomer. The cofactor is Mg(2+).

The protein resides in the cytoplasm. It carries out the reaction DNA(n) + a 2'-deoxyribonucleoside 5'-triphosphate = DNA(n+1) + diphosphate. Poorly processive, error-prone DNA polymerase involved in untargeted mutagenesis. Copies undamaged DNA at stalled replication forks, which arise in vivo from mismatched or misaligned primer ends. These misaligned primers can be extended by PolIV. Exhibits no 3'-5' exonuclease (proofreading) activity. May be involved in translesional synthesis, in conjunction with the beta clamp from PolIII. This chain is DNA polymerase IV, found in Leptospira interrogans serogroup Icterohaemorrhagiae serovar copenhageni (strain Fiocruz L1-130).